The following is a 221-amino-acid chain: Thiamine-phosphate synthase (221 aa).

Residues 47–51 (QYREK) and Asn79 each bind 4-amino-2-methyl-5-(diphosphooxymethyl)pyrimidine. 2 residues coordinate Mg(2+): Asp80 and Asp99. Residue Thr118 coordinates 4-amino-2-methyl-5-(diphosphooxymethyl)pyrimidine. 2-[(2R,5Z)-2-carboxy-4-methylthiazol-5(2H)-ylidene]ethyl phosphate is bound at residue 144–146 (SFT). Lys147 lines the 4-amino-2-methyl-5-(diphosphooxymethyl)pyrimidine pocket. 2-[(2R,5Z)-2-carboxy-4-methylthiazol-5(2H)-ylidene]ethyl phosphate contacts are provided by residues Gly175 and 195-196 (VT).

The protein belongs to the thiamine-phosphate synthase family. Mg(2+) is required as a cofactor.

It catalyses the reaction 2-[(2R,5Z)-2-carboxy-4-methylthiazol-5(2H)-ylidene]ethyl phosphate + 4-amino-2-methyl-5-(diphosphooxymethyl)pyrimidine + 2 H(+) = thiamine phosphate + CO2 + diphosphate. The catalysed reaction is 2-(2-carboxy-4-methylthiazol-5-yl)ethyl phosphate + 4-amino-2-methyl-5-(diphosphooxymethyl)pyrimidine + 2 H(+) = thiamine phosphate + CO2 + diphosphate. The enzyme catalyses 4-methyl-5-(2-phosphooxyethyl)-thiazole + 4-amino-2-methyl-5-(diphosphooxymethyl)pyrimidine + H(+) = thiamine phosphate + diphosphate. It participates in cofactor biosynthesis; thiamine diphosphate biosynthesis; thiamine phosphate from 4-amino-2-methyl-5-diphosphomethylpyrimidine and 4-methyl-5-(2-phosphoethyl)-thiazole: step 1/1. Its function is as follows. Condenses 4-methyl-5-(beta-hydroxyethyl)thiazole monophosphate (THZ-P) and 2-methyl-4-amino-5-hydroxymethyl pyrimidine pyrophosphate (HMP-PP) to form thiamine monophosphate (TMP). This chain is Thiamine-phosphate synthase, found in Caldicellulosiruptor saccharolyticus (strain ATCC 43494 / DSM 8903 / Tp8T 6331).